The sequence spans 626 residues: Division abnormally delayed protein (626 aa).

The N-terminal stretch at 1 to 26 is a signal peptide; sequence MAARSVRLAQLLLFTLLCGFVGLSAA. Over residues 41–52 the composition is skewed to basic residues; sequence LHSATTHHRRRL. The tract at residues 41–65 is disordered; that stretch reads LHSATTHHRRRLQRDSRAKDAVGGS. N-linked (GlcNAc...) asparagine; atypical glycosylation occurs at Asn-97. 3 N-linked (GlcNAc...) asparagine glycosylation sites follow: Asn-101, Asn-150, and Asn-187. Residues 533-607 are disordered; that stretch reads NSIQATHDIQ…GKTSGSNPLE (75 aa). O-linked (Xyl...) (heparan sulfate) serine glycosylation is found at Ser-549, Ser-569, Ser-573, and Ser-601. A compositionally biased stretch (gly residues) spans 565-575; that stretch reads GAHGSGDGSGD. Gly-602 carries GPI-anchor amidated glycine lipidation. A propeptide spans 603-626 (removed in mature form); sequence SNPLEGTATWMLLTLVTMLFSSCS.

This sequence belongs to the glypican family. As to quaternary structure, interacts with nord; the interaction promotes dally degradation. Interacts with Magu. As part of the dally/ Magu complex, associates with fwe (isoforms ubi, LoseA and LoseB) and is unable to interact with fwe independently of Magu.

It is found in the cell membrane. Cell surface proteoglycan that bears heparan sulfate. Functions as a coreceptor for growth factors and morphogens, such as the products of dpp, to regulate signaling and distribution of these ligands. Required for cell division patterning during postembryonic development of the nervous system. Plays a role in dpp/BMP signaling possibly by stabilizing dpp and thereby creating a morphological gradient during wing development. Might have a role in testis development. Functions with magu and fwe in a mechanism of scaling, which utilises apoptosis to ensure that the dpp patterning gradient remains proportional to the size of the growing wing. In this mechanism, fwe represses dally and Magu-dependent activity in expanding the gradient, and dally/Magu inhibits fwe-dependent apoptosis to keep cell death rate low. When the levels of these different proteins are optimally regulated the gradient correctly scales with organ growth but when this fails, fwe-mediated apoptosis is activated to trim the developing tissue to match the correct size of the gradient. The chain is Division abnormally delayed protein (dally) from Drosophila melanogaster (Fruit fly).